A 180-amino-acid chain; its full sequence is Large ribosomal subunit protein uL6 (180 aa).

This sequence belongs to the universal ribosomal protein uL6 family. Part of the 50S ribosomal subunit.

In terms of biological role, this protein binds to the 23S rRNA, and is important in its secondary structure. It is located near the subunit interface in the base of the L7/L12 stalk, and near the tRNA binding site of the peptidyltransferase center. This Clostridium tetani (strain Massachusetts / E88) protein is Large ribosomal subunit protein uL6.